Here is a 495-residue protein sequence, read N- to C-terminus: Cytochrome P450 monooxygenase BOA4 (495 aa).

Residues 12-31 (LANSNTVIAGCIVFALYYLF) form a helical membrane-spanning segment. N115 carries N-linked (GlcNAc...) asparagine glycosylation. C439 is a binding site for heme.

This sequence belongs to the cytochrome P450 family. Requires heme as cofactor.

It localises to the membrane. It participates in polyketide biosynthesis. In terms of biological role, cytochrome P450 monooxygenase; part of the gene cluster A that mediates the biosynthesis of botcinic acid and its botcinin derivatives, acetate-derived polyketides that contribute to virulence when combined with the sesquiterpene botrydial. Botcinic acid and its derivatives have been shown to induce chlorosis and necrosis during host plant infection, but also have antifungal activities. Two polyketide synthases, BOA6 and BOA9, are involved in the biosynthesis of botcinins. BOA6 mediates the formation of the per-methylated tetraketide core by condensation of four units of malonyl-CoA with one unit of acetyl-CoA, which would be methylated in activated methylene groups to yield a bicyclic acid intermediate that could then either be converted to botrylactone derivatives or lose the starter acetate unit through a retro-Claisen type C-C bond cleavage to yield botcinin derivatives. The second polyketide synthase, BOA9, is probably required for the biosynthesis of the tetraketide side chain of botcinins. The methyltransferase (MT) domain within BOA6 is probably responsible for the incorporation of four methyl groups. The trans-enoyl reductase BOA5 might take over the enoyl reductase function of BOA6 that misses an ER domain. The monooxygenases BOA2, BOA3 and BOA4 might be involved in further hydroxylations at C4, C5 and C8, whereas BOA7, close to BOA9, could potentially be involved in the hydroxylation at C4 in the side chain of botcinins. The protein is Cytochrome P450 monooxygenase BOA4 of Botryotinia fuckeliana (strain B05.10) (Noble rot fungus).